A 222-amino-acid polypeptide reads, in one-letter code: MSPTEAPKVRVTLFCILVGIVLAMTAVVSDHWAVLSPHMENHNTTCEAAHFGLWRICTKRIALGEDRSCGPITLPGEKNCSYFRHFNPGESSEIFEFTTQKEYSISAAAISVFSLGFLIMGTICALMAFRKKRDYLLRPASMFYVFAGLCLFVSLEVMRQSVKRMIDSEDTVWIEYYYSWSFACACAAFVLLFLGGISLLLFSLPRMPQNPWESCMDAEPEH.

Over 1–10 the chain is Cytoplasmic; it reads MSPTEAPKVR. Residues 11–29 form a helical membrane-spanning segment; that stretch reads VTLFCILVGIVLAMTAVVS. Over 30-108 the chain is Extracellular; the sequence is DHWAVLSPHM…TQKEYSISAA (79 aa). N-linked (GlcNAc...) asparagine glycosylation is found at Asn-43 and Asn-79. The cysteines at positions 57 and 80 are disulfide-linked. Residues 109 to 129 traverse the membrane as a helical segment; that stretch reads AISVFSLGFLIMGTICALMAF. The Cytoplasmic portion of the chain corresponds to 130 to 134; sequence RKKRD. A helical transmembrane segment spans residues 135-155; the sequence is YLLRPASMFYVFAGLCLFVSL. Residues 156 to 179 are Extracellular-facing; that stretch reads EVMRQSVKRMIDSEDTVWIEYYYS. A helical transmembrane segment spans residues 180–204; sequence WSFACACAAFVLLFLGGISLLLFSL. Residues 205-222 are Cytoplasmic-facing; it reads PRMPQNPWESCMDAEPEH.

It belongs to the PMP-22/EMP/MP20 family. CACNG subfamily. As to quaternary structure, component of a calcium channel complex consisting of a pore-forming alpha subunit (CACNA1S) and the ancillary subunits CACNB1 or CACNB2, CACNG1 and CACNA2D1. The channel complex contains alpha, beta, gamma and delta subunits in a 1:1:1:1 ratio, i.e. it contains either CACNB1 or CACNB2. N-glycosylated. In terms of tissue distribution, skeletal muscle (at protein level).

It localises to the cell membrane. The protein localises to the sarcolemma. Functionally, regulatory subunit of the voltage-gated calcium channel that gives rise to L-type calcium currents in skeletal muscle. Regulates channel inactivation kinetics. The polypeptide is Voltage-dependent calcium channel gamma-1 subunit (CACNG1) (Oryctolagus cuniculus (Rabbit)).